A 156-amino-acid chain; its full sequence is ATP synthase subunit b (156 aa).

The chain crosses the membrane as a helical span at residues Ala-13 to Ile-33.

Belongs to the ATPase B chain family. In terms of assembly, F-type ATPases have 2 components, F(1) - the catalytic core - and F(0) - the membrane proton channel. F(1) has five subunits: alpha(3), beta(3), gamma(1), delta(1), epsilon(1). F(0) has three main subunits: a(1), b(2) and c(10-14). The alpha and beta chains form an alternating ring which encloses part of the gamma chain. F(1) is attached to F(0) by a central stalk formed by the gamma and epsilon chains, while a peripheral stalk is formed by the delta and b chains.

The protein resides in the cell inner membrane. In terms of biological role, f(1)F(0) ATP synthase produces ATP from ADP in the presence of a proton or sodium gradient. F-type ATPases consist of two structural domains, F(1) containing the extramembraneous catalytic core and F(0) containing the membrane proton channel, linked together by a central stalk and a peripheral stalk. During catalysis, ATP synthesis in the catalytic domain of F(1) is coupled via a rotary mechanism of the central stalk subunits to proton translocation. Its function is as follows. Component of the F(0) channel, it forms part of the peripheral stalk, linking F(1) to F(0). The chain is ATP synthase subunit b from Aeromonas salmonicida (strain A449).